The following is a 284-amino-acid chain: 4-diphosphocytidyl-2-C-methyl-D-erythritol kinase (284 aa).

Residue K14 is part of the active site. Position 97–107 (97–107 (PMGGGLGGGSS)) interacts with ATP. D139 is an active-site residue.

Belongs to the GHMP kinase family. IspE subfamily.

The catalysed reaction is 4-CDP-2-C-methyl-D-erythritol + ATP = 4-CDP-2-C-methyl-D-erythritol 2-phosphate + ADP + H(+). It participates in isoprenoid biosynthesis; isopentenyl diphosphate biosynthesis via DXP pathway; isopentenyl diphosphate from 1-deoxy-D-xylulose 5-phosphate: step 3/6. Its function is as follows. Catalyzes the phosphorylation of the position 2 hydroxy group of 4-diphosphocytidyl-2C-methyl-D-erythritol. The chain is 4-diphosphocytidyl-2-C-methyl-D-erythritol kinase from Psychromonas ingrahamii (strain DSM 17664 / CCUG 51855 / 37).